Reading from the N-terminus, the 1048-residue chain is 3-hydroxy-3-methylglutaryl-coenzyme A reductase (1048 aa).

The Cytoplasmic segment spans residues 1 to 32 (MDPVVRKPDPGGVQHRVTKALRAIVGHACRHP). Residues 33–53 (IHTLLVTALTAATTHLHVLEG) form a helical membrane-spanning segment. Topologically, residues 54-220 (TYQATHRGLA…FLHRVHHAET (167 aa)) are lumenal. Residues 221–241 (VDLVIIGLSYLAMNMTVVSLF) traverse the membrane as a helical segment. Residues 222–403 (DLVIIGLSYL…FTFYATILCV (182 aa)) enclose the SSD domain. Topologically, residues 242-250 (RVMRHLGSR) are cytoplasmic. Residues 251–271 (FWLAASVLLSGAFAFVLGLGI) traverse the membrane as a helical segment. Residues 272-276 (TTTCD) are Lumenal-facing. A helical membrane pass occupies residues 277–297 (VPVDMLLLFEGIPYLVLTVGF). Residues 298–348 (EKPIQLTRAVLCVSEELWGGGQRQVPNGASSDDSRQNQLIPNIIQLAVDRE) lie on the Cytoplasmic side of the membrane. A helical membrane pass occupies residues 349 to 369 (GWYIVRSYLLEIGALALGAVL). The Lumenal segment spans residues 370 to 377 (RPKDSLGH). The chain crosses the membrane as a helical span at residues 378–398 (FCFLAAWTLLIDAVLLFTFYA). Topologically, residues 399-439 (TILCVKLEITRIRSPGGLGQVNAKHPSGIFGHKVKSTNITW) are cytoplasmic. Residues 440–460 (WKLLTVGGFVLCHFLQLSPFF) form a helical membrane-spanning segment. The Lumenal segment spans residues 461–542 (YRVMGEYMAN…LDGLESPLGR (82 aa)). N-linked (GlcNAc...) asparagine glycosylation is found at Asn-470 and Asn-520. The chain crosses the membrane as a helical span at residues 543–563 (LCLMGALVVSLVLNNHLIHAA). Topologically, residues 564–1048 (RWHAWPQARE…NRSAGATVKK (485 aa)) are cytoplasmic. Glu-729 (charge relay system) is an active-site residue. Position 735 to 741 (735 to 741 (SASRGCK)) interacts with CoA. NADP(+)-binding positions include 796–798 (SRF) and 823–831 (DAMGMNMIS). Lys-863 serves as the catalytic Charge relay system. 892 to 894 (VLK) is a CoA binding site. Asp-939 acts as the Charge relay system in catalysis. Residue 1034-1035 (AH) coordinates CoA. The active-site Proton donor is the His-1035. 1039–1040 (NR) provides a ligand contact to NADP(+).

The protein belongs to the HMG-CoA reductase family.

Its subcellular location is the endoplasmic reticulum membrane. It carries out the reaction (R)-mevalonate + 2 NADP(+) + CoA = (3S)-3-hydroxy-3-methylglutaryl-CoA + 2 NADPH + 2 H(+). Its pathway is metabolic intermediate biosynthesis; (R)-mevalonate biosynthesis; (R)-mevalonate from acetyl-CoA: step 3/3. In terms of biological role, HMG-CoA reductase; part of the first module of ergosterol biosynthesis pathway that includes the early steps of the pathway, conserved across all eukaryotes, and which results in the formation of mevalonate from acetyl-coenzyme A (acetyl-CoA). In this module, the cytosolic acetyl-CoA acetyltransferase catalyzes the formation of acetoacetyl-CoA. The hydroxymethylglutaryl-CoA synthase then condenses acetyl-CoA with acetoacetyl-CoA to form HMG-CoA. The rate-limiting step of the early module is the reduction to mevalonate by the 3-hydroxy-3-methylglutaryl-coenzyme A (HMG-CoA) reductase. The sequence is that of 3-hydroxy-3-methylglutaryl-coenzyme A reductase from Aspergillus terreus.